An 829-amino-acid chain; its full sequence is UBA domain-containing protein 8 (829 aa).

An EH 1 domain is found at 10 to 109; it reads EQQEFDRLLE…KQAKDDHHIK (100 aa). The EF-hand 1 domain occupies 43-78; sequence LPQKILAKIWDYCDQEDKGSLDRNQVYACFRLISQA. The interval 93–121 is disordered; the sequence is GDPPILPKQAKDDHHIKRSSSETADFTPF. Residues Ser-112 and Ser-113 each carry the phosphoserine modification. EH domains follow at residues 129–225 and 300–398; these read ERSE…AKSE and DRSN…SDDT. The region spanning 333–368 is the EF-hand 2 domain; that stretch reads LDSEELARIWDTVDTQDRGYIDKDEFAVAMEIIKLR. Polar residues-rich tracts occupy residues 466–506 and 574–590; these read SFQD…TQSI and TIPGSTSAALDDQQTTE. Disordered regions lie at residues 466-520, 574-614, and 724-785; these read SFQD…VNSS, TIPG…MRKL, and KPQV…QSYE. Residues 602 to 709 adopt a coiled-coil conformation; the sequence is EPTEEEQEEM…AKIDSIIADS (108 aa). The segment covering 728–737 has biased composition (pro residues); the sequence is TPAPPTPAPT. A compositionally biased stretch (polar residues) spans 764-774; it reads HANSSTPMNYV. Residues 775 to 785 are compositionally biased toward low complexity; it reads SQPESPPQSYE. The UBA domain maps to 788-828; the sequence is QNDNELLQELLSMGFPREKAVIALEATNYDVNEAANILLSS.

The protein is UBA domain-containing protein 8 (ucp8) of Schizosaccharomyces pombe (strain 972 / ATCC 24843) (Fission yeast).